The chain runs to 716 residues: Polyribonucleotide nucleotidyltransferase (716 aa).

Residues aspartate 486 and aspartate 492 each coordinate Mg(2+). The region spanning 553-612 (PHIYNIKINPEKIKDVIGKGGAVIRALSDETDTKIDISDDGNITIAALSQKSAAFAQQRI) is the KH domain. In terms of domain architecture, S1 motif spans 622 to 690 (GRIYQGTVTR…RQGRIRLSIK (69 aa)).

It belongs to the polyribonucleotide nucleotidyltransferase family. In terms of assembly, component of the RNA degradosome, which is a multiprotein complex involved in RNA processing and mRNA degradation. It depends on Mg(2+) as a cofactor.

Its subcellular location is the cytoplasm. It catalyses the reaction RNA(n+1) + phosphate = RNA(n) + a ribonucleoside 5'-diphosphate. Functionally, involved in mRNA degradation. Catalyzes the phosphorolysis of single-stranded polyribonucleotides processively in the 3'- to 5'-direction. The protein is Polyribonucleotide nucleotidyltransferase of Hamiltonella defensa subsp. Acyrthosiphon pisum (strain 5AT).